The following is a 295-amino-acid chain: G1/S-specific cyclin-D1 (295 aa).

Residues 28–152 (LRAMLKAEET…LLVNKLKWNL (125 aa)) enclose the Cyclin N-terminal domain. Positions 264-295 (QQSLDPKAAEEEEEEEEADLACTPTDVRDVNI) are disordered. K270 participates in a covalent cross-link: Glycyl lysine isopeptide (Lys-Gly) (interchain with G-Cter in ubiquitin). Residues 273 to 282 (EEEEEEEEAD) are compositionally biased toward acidic residues. T286 bears the Phosphothreonine mark.

The protein belongs to the cyclin family. Cyclin D subfamily. Interacts with either CDK4 or CDK6 protein kinase to form a serine/threonine kinase holoenzyme complex. The cyclin subunit imparts substrate specificity to the complex. Component of the ternary complex CCND1/CDK4/CDKN1B required for nuclear translocation and modulation of CDK4-mediated kinase activity. Interacts directly with CDKN1B. Can form similar complexes with either CDKN1A or CDKN2A. Interacts with UHRF2; the interaction ubiquitinates CCND1 and appears to occur independently of phosphorylation. Interacts with USP2. Interacts (via cyclin N-terminal domain) with INSM1 (via N-terminal region); the interaction competes with the binding of CCND1 to CDK4 during cell cycle progression and inhibits CDK4 activity. Interacts with CDK4; the interaction is prevented with the binding of CCND1 to INSM1 during cell cycle progression. Post-translationally, phosphorylation at Thr-286 by MAP kinases is required for ubiquitination and degradation by the DCX(AMBRA1) complex. It also plays an essential role for recognition by the FBXO31 component of SCF (SKP1-cullin-F-box) protein ligase complex following DNA damage. Ubiquitinated at Lys-270 by the DCX(AMBRA1) complex during the transition from G1 to S cell phase, leading to its degradation: ubiquitination is dependent on Thr-286 phosphorylation. The DCX(AMBRA1) complex represents the major regulator of CCND1 stability during the G1/S transition. Also ubiquitinated by the SCF(FBXO4) and Cul7-RING(FBXW8) ubiquitin-protein ligase complexes. Following DNA damage it is ubiquitinated by the SCF(FBXO31) protein ligase complex. SCF(FBXO31) ubiquitination is dependent on Thr-286 phosphorylation. Ubiquitinated also by UHRF2 apparently in a phosphorylation-independent manner. Ubiquitination leads to its degradation and G1 arrest. Deubiquitinated by USP2; leading to its stabilization.

It localises to the nucleus. The protein resides in the cytoplasm. It is found in the nucleus membrane. Its function is as follows. Regulatory component of the cyclin D1-CDK4 (DC) complex that phosphorylates and inhibits members of the retinoblastoma (RB) protein family including RB1 and regulates the cell-cycle during G(1)/S transition. Phosphorylation of RB1 allows dissociation of the transcription factor E2F from the RB/E2F complex and the subsequent transcription of E2F target genes which are responsible for the progression through the G(1) phase. Hypophosphorylates RB1 in early G(1) phase. Cyclin D-CDK4 complexes are major integrators of various mitogenenic and antimitogenic signals. Also a substrate for SMAD3, phosphorylating SMAD3 in a cell-cycle-dependent manner and repressing its transcriptional activity. Component of the ternary complex, cyclin D1/CDK4/CDKN1B, required for nuclear translocation and activity of the cyclin D-CDK4 complex. Exhibits transcriptional corepressor activity with INSM1 on the NEUROD1 and INS promoters in a cell cycle-independent manner. In Canis lupus familiaris (Dog), this protein is G1/S-specific cyclin-D1 (CCND1).